Reading from the N-terminus, the 588-residue chain is Snake venom 5'-nucleotidase (588 aa).

The signal sequence occupies residues 1–40; it reads MQTPKRRRGAQGCPRSSPSPPLLLLVGAVWFCAALSVAAG. Residues D51 and H53 each coordinate Zn(2+). C66 and C71 are disulfide-bonded. N88 is a glycosylation site (N-linked (GlcNAc...) asparagine). 2 residues coordinate Zn(2+): D99 and N131. N167 carries N-linked (GlcNAc...) asparagine glycosylation. Zn(2+) is bound by residues H234 and H257. N327, N347, and N361 each carry an N-linked (GlcNAc...) asparagine glycan. 2 cysteine pairs are disulfide-bonded: C367-C372 and C379-C401. R368 lines the AMP pocket. The AMP site is built by N404 and R409. N418 carries N-linked (GlcNAc...) asparagine glycosylation. F432 lines the AMP pocket. Cysteines 491 and 494 form a disulfide. AMP-binding residues include F515 and D521. N532 carries an N-linked (GlcNAc...) asparagine glycan. S564 is lipidated: GPI-anchor amidated serine. Residues 565–588 constitute a propeptide, removed in mature form; that stretch reads AGTLFQAQLFLTWGLCISLLYFIL.

This sequence belongs to the 5'-nucleotidase family. The cofactor is Zn(2+). In terms of processing, venom 5'-nucleotidases (or a part thereof) may be released into the venom via exosome-like vesicles. They may be attached via a GPI anchor to the membrane of these vesicles. Soluble forms of 5'-nucleotidase might be released by cleavage of the ectodomain in the exosome-like vesicles or venom gland cells. As to expression, expressed by the venom gland.

Its subcellular location is the membrane. It catalyses the reaction a ribonucleoside 5'-phosphate + H2O = a ribonucleoside + phosphate. Hydrolyzes nucleotides into nucleosides. Snake venom 5'-nucleotidases are widely distributed among venomous snake taxa, but there is a lack of information about their biological activities. They have been shown to inhibit platelet aggregation. This effect may be due to the liberation of inhibitory AMP or adenosine by its action on ADP released upon initiation of aggregation. Venom 5'-nucleotidases are also known to synergistically act in vivo with other toxins like ADPases, phospholipases, and disintegrins to exert a more pronounced anti-coagulant effect. The polypeptide is Snake venom 5'-nucleotidase (Gloydius brevicauda (Korean slamosa snake)).